The chain runs to 384 residues: Formate-dependent phosphoribosylglycinamide formyltransferase (384 aa).

N(1)-(5-phospho-beta-D-ribosyl)glycinamide contacts are provided by residues 14-15 and Glu74; that span reads EL. Residues Arg106, Lys147, 152-157, 187-190, and Glu195 contribute to the ATP site; these read SSGKGQ and EEFI. The 190-residue stretch at 111–300 folds into the ATP-grasp domain; the sequence is RLAAETLGLA…EFALHVRAIL (190 aa). 2 residues coordinate Mg(2+): Glu259 and Glu271. Residues Asp278, Lys348, and 355 to 356 each bind N(1)-(5-phospho-beta-D-ribosyl)glycinamide; that span reads RR.

This sequence belongs to the PurK/PurT family. Homodimer.

It carries out the reaction N(1)-(5-phospho-beta-D-ribosyl)glycinamide + formate + ATP = N(2)-formyl-N(1)-(5-phospho-beta-D-ribosyl)glycinamide + ADP + phosphate + H(+). It functions in the pathway purine metabolism; IMP biosynthesis via de novo pathway; N(2)-formyl-N(1)-(5-phospho-D-ribosyl)glycinamide from N(1)-(5-phospho-D-ribosyl)glycinamide (formate route): step 1/1. Catalyzes two reactions: the first one is the production of beta-formyl glycinamide ribonucleotide (GAR) from formate, ATP and beta GAR; the second, a side reaction, is the production of acetyl phosphate and ADP from acetate and ATP. Its function is as follows. Involved in the de novo purine biosynthesis. Catalyzes the transfer of formate to 5-phospho-ribosyl-glycinamide (GAR), producing 5-phospho-ribosyl-N-formylglycinamide (FGAR). Formate is provided by PurU via hydrolysis of 10-formyl-tetrahydrofolate. The chain is Formate-dependent phosphoribosylglycinamide formyltransferase from Bacillus subtilis (strain 168).